A 317-amino-acid chain; its full sequence is Methionyl-tRNA formyltransferase (317 aa).

112–115 (SLLP) contributes to the (6S)-5,6,7,8-tetrahydrofolate binding site.

Belongs to the Fmt family.

The catalysed reaction is L-methionyl-tRNA(fMet) + (6R)-10-formyltetrahydrofolate = N-formyl-L-methionyl-tRNA(fMet) + (6S)-5,6,7,8-tetrahydrofolate + H(+). Its function is as follows. Attaches a formyl group to the free amino group of methionyl-tRNA(fMet). The formyl group appears to play a dual role in the initiator identity of N-formylmethionyl-tRNA by promoting its recognition by IF2 and preventing the misappropriation of this tRNA by the elongation apparatus. This Geobacter sulfurreducens (strain ATCC 51573 / DSM 12127 / PCA) protein is Methionyl-tRNA formyltransferase.